The sequence spans 858 residues: Leucine--tRNA ligase (858 aa).

The short motif at 42-52 is the 'HIGH' region element; the sequence is PYPSGRLHMGH. Residues 618–622 carry the 'KMSKS' region motif; sequence KMSKS. Lys621 provides a ligand contact to ATP.

This sequence belongs to the class-I aminoacyl-tRNA synthetase family.

The protein localises to the cytoplasm. It catalyses the reaction tRNA(Leu) + L-leucine + ATP = L-leucyl-tRNA(Leu) + AMP + diphosphate. This chain is Leucine--tRNA ligase, found in Aliivibrio fischeri (strain MJ11) (Vibrio fischeri).